The chain runs to 648 residues: Chaperone protein HtpG (648 aa).

The tract at residues 1–349 (MTTEHAAGAQ…SSDLPLNVSR (349 aa)) is a; substrate-binding. Positions 350-570 (EILQESKDID…EHDVGMNLAR (221 aa)) are b. The c stretch occupies residues 571–648 (ILKAAGQQAP…MAMGGSAGTD (78 aa)).

It belongs to the heat shock protein 90 family. As to quaternary structure, homodimer.

The protein localises to the cytoplasm. Its function is as follows. Molecular chaperone. Has ATPase activity. The sequence is that of Chaperone protein HtpG from Aromatoleum aromaticum (strain DSM 19018 / LMG 30748 / EbN1) (Azoarcus sp. (strain EbN1)).